The primary structure comprises 376 residues: 5-amino-6-(D-ribitylamino)uracil--L-tyrosine 4-hydroxyphenyl transferase 1 (376 aa).

A Radical SAM core domain is found at 50 to 275 (VTYVVNRNIN…PGLEDLKVYA (226 aa)). [4Fe-4S] cluster is bound by residues Cys64, Cys68, and Cys71.

Belongs to the radical SAM superfamily. CofH family. As to quaternary structure, consists of two subunits, CofG and CofH. [4Fe-4S] cluster is required as a cofactor.

It carries out the reaction 5-amino-6-(D-ribitylamino)uracil + L-tyrosine + S-adenosyl-L-methionine = 5-amino-5-(4-hydroxybenzyl)-6-(D-ribitylimino)-5,6-dihydrouracil + 2-iminoacetate + 5'-deoxyadenosine + L-methionine + H(+). It functions in the pathway cofactor biosynthesis; coenzyme F0 biosynthesis. Functionally, catalyzes the radical-mediated synthesis of 5-amino-5-(4-hydroxybenzyl)-6-(D-ribitylimino)-5,6-dihydrouracil from 5-amino-6-(D-ribitylamino)uracil and L-tyrosine. In Methanosarcina mazei (strain ATCC BAA-159 / DSM 3647 / Goe1 / Go1 / JCM 11833 / OCM 88) (Methanosarcina frisia), this protein is 5-amino-6-(D-ribitylamino)uracil--L-tyrosine 4-hydroxyphenyl transferase 1.